A 217-amino-acid chain; its full sequence is MAEISAKLVKELRDQTGAGMMDCKKALNETSGDLTKATEWLRQKGIASAEKKAGRTAAEGAVGSYIHTGARVGVLVEVNCETDFVARGDAFQELVRNVAMQIAACPNVEFVTTDDIPADVKERETNIEMGRDDLGNKPEAMKAKIVEGRVNKRLKELALLEQPFIKDSSLSVAEMVKQLAGKIGENIQVRRFTRYTLGEGIEVKQEDFAAEVAAMTA.

An involved in Mg(2+) ion dislocation from EF-Tu region spans residues 82-85 (TDFV).

This sequence belongs to the EF-Ts family.

Its subcellular location is the cytoplasm. Its function is as follows. Associates with the EF-Tu.GDP complex and induces the exchange of GDP to GTP. It remains bound to the aminoacyl-tRNA.EF-Tu.GTP complex up to the GTP hydrolysis stage on the ribosome. In Synechococcus sp. (strain RCC307), this protein is Elongation factor Ts.